The primary structure comprises 124 residues: Putative RNA polymerase II transcriptional coactivator (124 aa).

The tract at residues 1–61 (MSSSSSSEDE…GRLKDSDGNE (61 aa)) is disordered. Composition is skewed to basic and acidic residues over residues 11–21 (LEKKVTKEQKK) and 39–58 (QEVK…KDSD).

The protein belongs to the transcriptional coactivator PC4 family.

It localises to the nucleus. Its function is as follows. General coactivator that functions cooperatively with TAFs and mediates functional interactions between upstream activators and the general transcriptional machinery. Binds single-stranded DNA. The protein is Putative RNA polymerase II transcriptional coactivator of Caenorhabditis elegans.